The sequence spans 357 residues: UDP-N-acetylglucosamine--N-acetylmuramyl-(pentapeptide) pyrophosphoryl-undecaprenol N-acetylglucosamine transferase (357 aa).

UDP-N-acetyl-alpha-D-glucosamine is bound by residues 15–17 (TGG), N124, R165, S194, and Q288.

The protein belongs to the glycosyltransferase 28 family. MurG subfamily.

The protein resides in the cell inner membrane. The catalysed reaction is di-trans,octa-cis-undecaprenyl diphospho-N-acetyl-alpha-D-muramoyl-L-alanyl-D-glutamyl-meso-2,6-diaminopimeloyl-D-alanyl-D-alanine + UDP-N-acetyl-alpha-D-glucosamine = di-trans,octa-cis-undecaprenyl diphospho-[N-acetyl-alpha-D-glucosaminyl-(1-&gt;4)]-N-acetyl-alpha-D-muramoyl-L-alanyl-D-glutamyl-meso-2,6-diaminopimeloyl-D-alanyl-D-alanine + UDP + H(+). It participates in cell wall biogenesis; peptidoglycan biosynthesis. Functionally, cell wall formation. Catalyzes the transfer of a GlcNAc subunit on undecaprenyl-pyrophosphoryl-MurNAc-pentapeptide (lipid intermediate I) to form undecaprenyl-pyrophosphoryl-MurNAc-(pentapeptide)GlcNAc (lipid intermediate II). This is UDP-N-acetylglucosamine--N-acetylmuramyl-(pentapeptide) pyrophosphoryl-undecaprenol N-acetylglucosamine transferase from Nostoc sp. (strain PCC 7120 / SAG 25.82 / UTEX 2576).